Here is a 125-residue protein sequence, read N- to C-terminus: Egg cell-secreted protein 1.3 (125 aa).

Residues 1-24 (MASNTSFLFVTVTLLLVLNVSSRA) form the signal peptide.

Belongs to the plant egg cell-secreted peptide family. In terms of tissue distribution, restricted to female reproductive tissues, specifically accumulating in storage vesicles of the unfertilized egg cell.

The protein localises to the cytoplasmic vesicle. Its subcellular location is the secreted. In terms of biological role, involved in the regulation of gamete interactions during the double fertilization and to prevent multiple-pollen tube attraction; mediates the redistribution of the gamete fusogen HAP2/GCS1 to the cell surface after secretion upon sperm arrival. This chain is Egg cell-secreted protein 1.3 (EC1.3), found in Arabidopsis thaliana (Mouse-ear cress).